A 179-amino-acid polypeptide reads, in one-letter code: Phospholipase A2 (179 aa).

The N-terminal stretch at 1–21 is a signal peptide; that stretch reads MHALRSSVLALWLCLHVSVRA. Residues 22–39 constitute a propeptide that is removed on maturation; it reads WMTYRSANGLDEYEPEDR. Ca(2+) is bound by residues W47, G49, and G51. Intrachain disulfides connect C48–C70, C69–C109, C76–C102, C100–C133, and C142–C150. H73 is an active-site residue. A Ca(2+)-binding site is contributed by D74. Residue D103 is part of the active site. A glycan (N-linked (GlcNAc...) asparagine) is linked at N112.

It depends on Ca(2+) as a cofactor. In terms of tissue distribution, expressed by the venom gland.

The protein resides in the secreted. The catalysed reaction is a 1,2-diacyl-sn-glycero-3-phosphocholine + H2O = a 1-acyl-sn-glycero-3-phosphocholine + a fatty acid + H(+). In terms of biological role, PLA2 catalyzes the calcium-dependent hydrolysis of the 2-acyl groups in 3-sn-phosphoglycerides. This Xylocopa appendiculata circumvolans (Japanese carpenter bee) protein is Phospholipase A2.